We begin with the raw amino-acid sequence, 68 residues long: Sec-independent protein translocase protein TatA (68 aa).

Residues 1-21 form a helical membrane-spanning segment; sequence MGSFSIWHWLIVLAVVLLLFG. Residues 48 to 68 are disordered; it reads AAAADKSIDGKTVDHKSDEVR. A compositionally biased stretch (basic and acidic residues) spans 53-68; it reads KSIDGKTVDHKSDEVR.

This sequence belongs to the TatA/E family. The Tat system comprises two distinct complexes: a TatABC complex, containing multiple copies of TatA, TatB and TatC subunits, and a separate TatA complex, containing only TatA subunits. Substrates initially bind to the TatABC complex, which probably triggers association of the separate TatA complex to form the active translocon.

It is found in the cell inner membrane. Its function is as follows. Part of the twin-arginine translocation (Tat) system that transports large folded proteins containing a characteristic twin-arginine motif in their signal peptide across membranes. TatA could form the protein-conducting channel of the Tat system. The protein is Sec-independent protein translocase protein TatA of Sinorhizobium medicae (strain WSM419) (Ensifer medicae).